The following is a 458-amino-acid chain: Dihydrolipoyl dehydrogenase (458 aa).

Residues 30–38 (DKGKLGGTC), K47, and A112 contribute to the FAD site. C38 and C43 are joined by a disulfide. NAD(+)-binding positions include 177 to 181 (GGGVI), E200, and 263 to 266 (AIGR). FAD is bound by residues D305 and A313. H437 acts as the Proton acceptor in catalysis.

It belongs to the class-I pyridine nucleotide-disulfide oxidoreductase family. In terms of assembly, homodimer. FAD is required as a cofactor.

The protein resides in the cytoplasm. It carries out the reaction N(6)-[(R)-dihydrolipoyl]-L-lysyl-[protein] + NAD(+) = N(6)-[(R)-lipoyl]-L-lysyl-[protein] + NADH + H(+). The protein operates within ketone degradation; acetoin degradation. The protein is Dihydrolipoyl dehydrogenase (acoL) of Bacillus subtilis (strain 168).